The chain runs to 381 residues: Trans-enoyl reductase iliB (381 aa).

50-53 provides a ligand contact to NADP(+); it reads VDGK. 145-152 contributes to the substrate binding site; the sequence is ATLATVGL. Residues 213-216, tyrosine 231, and 278-279 each bind NADP(+); these read SPGS and LD. 298-302 serves as a coordination point for substrate; sequence TYTQF. 367–368 contributes to the NADP(+) binding site; sequence IS.

The protein belongs to the zinc-containing alcohol dehydrogenase family. In terms of assembly, monomer.

The catalysed reaction is N-[(4E,6E,10S,12Z,14E)-6,10-dimethyl-3-oxohexadeca-4,6,12,14-tetraenoyl]-L-tyrosyl-[ACP] = (3E,5S)-3-[(2E,4E,8S,10E,12Z)-1-hydroxy-4,8-dimethyltetradeca-2,4,10,12-tetraen-1-ylidene]-5-[(4-hydroxyphenyl)methyl]pyrrolidine-2,4-dione + holo-[ACP] + H(+). It functions in the pathway mycotoxin biosynthesis. Functionally, trans-enoyl reductase; part of the gene cluster that mediates the biosynthesis of ilicicolin H, a 4-hydroxy-2-pyridonealkaloid that has potent and broad antifungal activities by inhibiting the mitochondrial respiration chain. IliB collaborates with the hybrid PKS-NRPS synthetase iliA to assemble the backbone of ilicicolin H. The PKS portion of iliA and trans-acting enoyl reductase iliB work together to construct an octaketide, and two methyl groups are introduced by the MT domain of iliA during the chain assembly. The nascent chain is then condensed with tyrosine, catalyzed by the iliA C domain, and the resulting PKS-NRPS hybrid is offloaded by the iliA RED domain to form an advanced tetramic acid intermediate. The biosynthesis of ilicicolin H starts with formation of the tetramic acid by the hybrid PKS-NRPS synthetase iliA with the partnering trans-enoyl reductase iliB since iliA lacks a designated enoylreductase (ER) domain. The cytochrome P450 monooxygenase iliC then catalyzes the ring expansion of the tetramate to the acyclic 2-pyridone. The pericyclase iliD further converts the acyclic 2-pyridone into 8-epi-ilicicolin H. 8-epi-ilicicolin H might then spontaneously convert to ilicicolin H since ilicicolin H is produced in the absence of the epimerase iliE, in contrast to what was observed for the Talaromyces variabilis ilicolin H biosynthetic pathway. This is Trans-enoyl reductase iliB from Neonectria sp. (strain DH2).